A 213-amino-acid polypeptide reads, in one-letter code: Ribosomal RNA small subunit methyltransferase G (213 aa).

Residues G81, L86, 132 to 133, and R147 each bind S-adenosyl-L-methionine; that span reads VE.

This sequence belongs to the methyltransferase superfamily. RNA methyltransferase RsmG family.

It is found in the cytoplasm. It carries out the reaction guanosine(527) in 16S rRNA + S-adenosyl-L-methionine = N(7)-methylguanosine(527) in 16S rRNA + S-adenosyl-L-homocysteine. In terms of biological role, specifically methylates the N7 position of guanine in position 527 of 16S rRNA. The chain is Ribosomal RNA small subunit methyltransferase G from Mannheimia succiniciproducens (strain KCTC 0769BP / MBEL55E).